Here is a 619-residue protein sequence, read N- to C-terminus: Enolase 4 (619 aa).

Basic and acidic residues predominate over residues 173–184 (DKERKELEKSQE). The disordered stretch occupies residues 173–236 (DKERKELEKS…PPEPPEPVLH (64 aa)). Pro residues predominate over residues 188–206 (PAPPPVTLPPPPPPPPPPP). E302 contacts substrate. Residues 333-354 (TLPPPKQETKKGHNGSKRAQPP) form a disordered region. K497 acts as the Proton acceptor in catalysis. K548 provides a ligand contact to substrate.

The protein belongs to the enolase family. As to quaternary structure, interacts with ENO1. Isoform 1 and isoform 4 interact with AKAP4. In terms of processing, synthesized as an approximately 70-kDa precursor, which then undergoes proteolytic cleavage to an approximately 60-kDa enzyme; HOATZ associates directly or indirectly with ENO4 to mediate this process before its transport to mature flagella. As to expression, testis-specific. Expressed in spermatids and ependyma (at protein level). Expressed at higher levels in late spermatids than in pachytene spermatocytes. In terms of tissue distribution, expressed at higher levels in pachytene spermatocytes than in late spermatids.

It carries out the reaction (2R)-2-phosphoglycerate = phosphoenolpyruvate + H2O. The protein operates within carbohydrate degradation; glycolysis; pyruvate from D-glyceraldehyde 3-phosphate: step 4/5. In terms of biological role, required for sperm motility, function and male fertility. May be involved in the normal assembly of the sperm fibrous sheath and provides most of the enolase activity in sperm. In Mus musculus (Mouse), this protein is Enolase 4 (Eno4).